The following is a 351-amino-acid chain: Anthranilate phosphoribosyltransferase (351 aa).

5-phospho-alpha-D-ribose 1-diphosphate-binding positions include Gly84, 87 to 88, 95 to 98, 113 to 121, and Ala125; these read GD, NISS, and KHGNRGASS. Residue Gly84 participates in anthranilate binding. Position 97 (Ser97) interacts with Mg(2+). Asn116 is an anthranilate binding site. Arg171 is an anthranilate binding site. Positions 229 and 230 each coordinate Mg(2+).

Belongs to the anthranilate phosphoribosyltransferase family. As to quaternary structure, homodimer. The cofactor is Mg(2+).

It catalyses the reaction N-(5-phospho-beta-D-ribosyl)anthranilate + diphosphate = 5-phospho-alpha-D-ribose 1-diphosphate + anthranilate. It functions in the pathway amino-acid biosynthesis; L-tryptophan biosynthesis; L-tryptophan from chorismate: step 2/5. Catalyzes the transfer of the phosphoribosyl group of 5-phosphorylribose-1-pyrophosphate (PRPP) to anthranilate to yield N-(5'-phosphoribosyl)-anthranilate (PRA). This is Anthranilate phosphoribosyltransferase from Clavibacter sepedonicus (Clavibacter michiganensis subsp. sepedonicus).